The chain runs to 422 residues: CRISPR-associated endodeoxyribonuclease Cas12f1 (422 aa).

The recognition domain (REC) stretch occupies residues 1 to 126 (MIKVYRYEIV…PSYKRDIPLD (126 aa)). The interval 127–211 (LIKENISVNR…YLNISYDFEP (85 aa)) is wedge domain (WED). Positions 212–220 (QTRVLDLNK) are linker. The tract at residues 221 to 370 (IMGIDLGVAV…IKIDPQYTSQ (150 aa)) is ruvC-I. Residues Asp225 and Glu324 contribute to the active site. The tract at residues 371–399 (RCSECGNIDSGNRIGQAIFKCRACGYEAN) is target nucleic acid-binding (TNB). Zn(2+) is bound by residues Cys372, Cys375, Cys391, and Cys394. Residues 400–420 (ADYNAARNIAIPNIDKIIAES) are ruvC-II. The active site involves Asp401.

The protein belongs to the CRISPR-associated endonuclease Cas12f family. As to quaternary structure, an asymmetric homodimer. Guide RNA is probably required for dimerization. Requires Mg(2+) as cofactor. Zn(2+) is required as a cofactor.

Functionally, CRISPR (clustered regularly interspaced short palindromic repeat), is an adaptive immune system that provides protection against mobile genetic elements (viruses, transposable elements and conjugative plasmids). CRISPR clusters contain sequences complementary to antecedent mobile elements and target invading nucleic acids. CRISPR clusters are transcribed and processed into CRISPR RNA (crRNA), which requires a trans-encoded small RNA (tracrRNA), but not this protein. Recognizes a short motif in the CRISPR repeat sequences (the 5' PAM or protospacer adjacent motif, YTT in this organism) to help distinguish self versus nonself, as targets within the CRISPR locus do not have PAMs. Has dsDNA endonuclease activity upon expression in E.coli of this protein, a mini CRISPR array and the probable tracrRNA. Plasmid cleavage is centered around positions 19-24 base pairs 3' of PAM. The mini system protects E.coli against transformation by foreign plasmids. This chain is CRISPR-associated endodeoxyribonuclease Cas12f1, found in Sulfoacidibacillus thermotolerans (Acidibacillus sulfuroxidans).